Consider the following 496-residue polypeptide: Catalase-A (496 aa).

Catalysis depends on residues His-54 and Asn-128. Tyr-338 contributes to the heme binding site. The Microbody targeting signal signature appears at 494–496 (SNL).

This sequence belongs to the catalase family. Requires heme as cofactor.

It is found in the peroxisome matrix. It carries out the reaction 2 H2O2 = O2 + 2 H2O. Its function is as follows. Catalyzes the degradation of hydrogen peroxide (H(2)O(2)) generated by peroxisomal oxidases to water and oxygen, thereby protecting cells from the toxic effects of hydrogen peroxide. This is Catalase-A (catA) from Dictyostelium discoideum (Social amoeba).